The chain runs to 239 residues: uncharacterized protein (239 aa).

Transmembrane regions (helical) follow at residues 9–29 (LAIY…SQII), 65–85 (IIYL…YLFI), 94–114 (IILI…TFVV), and 167–187 (IYFA…MHWI).

Its subcellular location is the cell membrane. This is an uncharacterized protein from Methanocaldococcus jannaschii (strain ATCC 43067 / DSM 2661 / JAL-1 / JCM 10045 / NBRC 100440) (Methanococcus jannaschii).